A 103-amino-acid chain; its full sequence is MLNIKKKDKVLILSGKDRGKKGEVIYVSPDKGKVIVTKINVVKRHTNPTRKDLGGIHKKEAPIAISKIMLICPKCSRGSRAKFDKLSDGKKIRVCRRCGEVIV.

It belongs to the universal ribosomal protein uL24 family. Part of the 50S ribosomal subunit.

Its function is as follows. One of two assembly initiator proteins, it binds directly to the 5'-end of the 23S rRNA, where it nucleates assembly of the 50S subunit. In terms of biological role, one of the proteins that surrounds the polypeptide exit tunnel on the outside of the subunit. The sequence is that of Large ribosomal subunit protein uL24 from Endomicrobium trichonymphae.